Reading from the N-terminus, the 437-residue chain is Lipid II isoglutaminyl synthase (glutamine-hydrolyzing) subunit MurT (437 aa).

Zn(2+)-binding residues include Cys-202, Cys-205, Cys-224, and Cys-226. Asp-349 is a catalytic residue.

Belongs to the MurCDEF family. MurT subfamily. Forms a heterodimer with GatD.

It catalyses the reaction beta-D-GlcNAc-(1-&gt;4)-Mur2Ac(oyl-L-Ala-gamma-D-Glu-L-Lys-D-Ala-D-Ala)-di-trans,octa-cis-undecaprenyl diphosphate + L-glutamine + ATP + H2O = beta-D-GlcNAc-(1-&gt;4)-Mur2Ac(oyl-L-Ala-D-isoglutaminyl-L-Lys-D-Ala-D-Ala)-di-trans,octa-cis-undecaprenyl diphosphate + L-glutamate + ADP + phosphate + H(+). The enzyme catalyses beta-D-GlcNAc-(1-&gt;4)-Mur2Ac(oyl-L-Ala-gamma-D-Glu-L-Lys-D-Ala-D-Ala)-di-trans,octa-cis-undecaprenyl diphosphate + ATP = beta-D-GlcNAc-(1-&gt;4)-Mur2Ac(oyl-L-Ala-gamma-D-O-P-Glu-L-Lys-D-Ala-D-Ala)-di-trans,octa-cis-undecaprenyl diphosphate + ADP. It carries out the reaction beta-D-GlcNAc-(1-&gt;4)-Mur2Ac(oyl-L-Ala-gamma-D-O-P-Glu-L-Lys-D-Ala-D-Ala)-di-trans,octa-cis-undecaprenyl diphosphate + NH4(+) = beta-D-GlcNAc-(1-&gt;4)-Mur2Ac(oyl-L-Ala-D-isoglutaminyl-L-Lys-D-Ala-D-Ala)-di-trans,octa-cis-undecaprenyl diphosphate + phosphate + H(+). It functions in the pathway cell wall biogenesis; peptidoglycan biosynthesis. Functionally, the lipid II isoglutaminyl synthase complex catalyzes the formation of alpha-D-isoglutamine in the cell wall lipid II stem peptide. The MurT subunit catalyzes the ATP-dependent amidation of D-glutamate residue of lipid II, converting it to an isoglutamine residue. This Staphylococcus aureus (strain N315) protein is Lipid II isoglutaminyl synthase (glutamine-hydrolyzing) subunit MurT.